The following is a 347-amino-acid chain: MRCRRLALGLGFSLLSGIALWSLWIYMETWLPFSYVPYYLPCPEIFNMKLQYKGEKPFQPVTRSPHPQPKLLEQRPTELLTLTPWLAPIVSEGTFNPELLQHIYQPLNLTIGLTVFAVGKYTRFVQHFLESAEQFFMQGYQVYYYIFTNDPAGIPRVPLGPGRLLSIIPIQRHSRWEEISTRRMETISRHIAQRAHREVDYLFCVDVDMVFRNPWGPETLGDLVAAIHPGYYAVPRQQFPYERRHISTAFVAENEGDFYYGGAVFGGRVAKVYEFTTGCHMAILADKANGIMAAWQEESHLNRRFISHKPSKVLSPEYLWDDRKPQPPSLKLIRFSTLDKATSWLRS.

Residues 1-5 (MRCRR) lie on the Cytoplasmic side of the membrane. The helical; Signal-anchor for type II membrane protein transmembrane segment at 6–26 (LALGLGFSLLSGIALWSLWIY) threads the bilayer. Residues 27-347 (METWLPFSYV…LDKATSWLRS (321 aa)) are Lumenal-facing. A glycan (N-linked (GlcNAc...) asparagine) is linked at asparagine 108. Residues 116–121 (FAVGKY), 206–208 (DVD), and 228–231 (HPGY) contribute to the substrate site. The Mn(2+) site is built by aspartate 206 and aspartate 208. Glutamate 298 (nucleophile) is an active-site residue.

It belongs to the glycosyltransferase 6 family. Requires Mn(2+) as cofactor.

Its subcellular location is the golgi apparatus membrane. The enzyme catalyses a globoside Gb4Cer (d18:1(4E)) + UDP-N-acetyl-alpha-D-galactosamine = a globoside Forssman (d18:1(4E)) + UDP + H(+). It catalyses the reaction a globoside Gb4Cer + UDP-N-acetyl-alpha-D-galactosamine = a globoside IV3GalNAc-Gb4Cer + UDP + H(+). It participates in protein modification; protein glycosylation. Catalyzes the formation of Forssman glycolipid via the addition of N-acetylgalactosamine (GalNAc) in alpha-1,3-linkage to GalNAcb-1,3Gala-1,4Galb-1,4GlcCer (Gb4Cer). Forssman glycolipid (also called Forssman antigen; FG) probably serves for adherence of some pathogens such as E.coli uropathogenic strains. This is Globoside alpha-1,3-N-acetylgalactosaminyltransferase 1 from Canis lupus familiaris (Dog).